We begin with the raw amino-acid sequence, 113 residues long: uncharacterized protein (113 aa).

It belongs to the ycf68 family.

Its subcellular location is the plastid. The protein resides in the chloroplast. This is an uncharacterized protein from Eucalyptus globulus subsp. globulus (Tasmanian blue gum).